Consider the following 64-residue polypeptide: Large ribosomal subunit protein uL30 (64 aa).

The protein belongs to the universal ribosomal protein uL30 family. Part of the 50S ribosomal subunit.

This chain is Large ribosomal subunit protein uL30, found in Rhodopseudomonas palustris (strain BisA53).